The following is a 194-amino-acid chain: DPY30 domain-containing protein 2 (194 aa).

Residues 126–172 are disordered; the sequence is EAFEKEPLKQESLPGTSDMIPGMPQQSPSSEPSVSSQVDLNTGTPQE. A compositionally biased stretch (low complexity) spans 149 to 163; that stretch reads PQQSPSSEPSVSSQV.

This sequence belongs to the dpy-30 family.

This Bos taurus (Bovine) protein is DPY30 domain-containing protein 2 (DYDC2).